Here is a 582-residue protein sequence, read N- to C-terminus: Peptidyl-prolyl cis-trans isomerase FKBP10 (582 aa).

The signal sequence occupies residues 1–26 (MFPAGPPSHSLLRLPLLQLLLLVVQA). 3 PPIase FKBP-type domains span residues 62–150 (GDFV…LDVW), 174–262 (GDFV…IDVH), and 286–374 (GDFM…IDFH). N-linked (GlcNAc...) asparagine glycans are attached at residues N70, N182, N294, N310, N352, N393, and N407. Residues 399–486 (GDFVRYHYNC…LFEVELVSRE (88 aa)) enclose the PPIase FKBP-type 4 domain. 2 EF-hand domains span residues 497-532 (WHKD…QVSE) and 542-577 (DPEK…DEER). D510, N512, D514, E516, E521, D555, N557, D559, K561, and E566 together coordinate Ca(2+). A disordered region spans residues 533–582 (GKGRLMPGQDPEKTIGDMFQNQDRNQDGKITVDELKLKSDEDEERVHEEL). Residues 556 to 582 (RNQDGKITVDELKLKSDEDEERVHEEL) show a composition bias toward basic and acidic residues. The Prevents secretion from ER motif lies at 579–582 (HEEL).

In terms of processing, glycosylated and phosphorylated.

Its subcellular location is the endoplasmic reticulum lumen. It carries out the reaction [protein]-peptidylproline (omega=180) = [protein]-peptidylproline (omega=0). Inhibited by both FK506 and rapamycin, but not by cyclosporin A. Its function is as follows. PPIases accelerate the folding of proteins during protein synthesis. This is Peptidyl-prolyl cis-trans isomerase FKBP10 (FKBP10) from Homo sapiens (Human).